Here is a 264-residue protein sequence, read N- to C-terminus: MATTTCQVVGLLLSLLGLAGCIAATGMDMWSTQDLYDNPVTAVFQYEGLWRSCVQQSSGFTECRPYFTILGLPAMLQAVRALMIVGIVLGVIGILVSIFALKCIRIGSMDDSAKAKMTLTSGILFIISGICAIIGVSVFANMLVTNFWMSTANMYSGMGGMGGMVQTVQTRYTFGAALFVGWVAGGLTLIGGVMMCIACRGLTPDDSNFKAVSYHASGQNVAYRPGGFKASTGFGSNTRNKKIYDGGARTEDDEQSHPTKYDYV.

Topologically, residues 1 to 6 (MATTTC) are cytoplasmic. The chain crosses the membrane as a helical span at residues 7–27 (QVVGLLLSLLGLAGCIAATGM). Over 28-80 (DMWSTQDLYDNPVTAVFQYEGLWRSCVQQSSGFTECRPYFTILGLPAMLQAVR) the chain is Extracellular. A helical transmembrane segment spans residues 81-101 (ALMIVGIVLGVIGILVSIFAL). Topologically, residues 102-122 (KCIRIGSMDDSAKAKMTLTSG) are cytoplasmic. Residues 123–143 (ILFIISGICAIIGVSVFANML) traverse the membrane as a helical segment. At 144 to 176 (VTNFWMSTANMYSGMGGMGGMVQTVQTRYTFGA) the chain is on the extracellular side. A helical membrane pass occupies residues 177-197 (ALFVGWVAGGLTLIGGVMMCI). Topologically, residues 198–264 (ACRGLTPDDS…QSHPTKYDYV (67 aa)) are cytoplasmic. Positions 198–264 (ACRGLTPDDS…QSHPTKYDYV (67 aa)) are required for role in regulation of RANKL-induced osteoclast differentiation. Serine 217 carries the post-translational modification Phosphoserine. A disordered region spans residues 241–264 (KKIYDGGARTEDDEQSHPTKYDYV). Positions 242–264 (KIYDGGARTEDDEQSHPTKYDYV) are enriched in basic and acidic residues.

It belongs to the claudin family. Interacts with TJP2/ZO-2. Interacts with TJP1/ZO-1. Interacts with YAP1 (phosphorylated); the interaction sequesters YAP1 away from the nucleus and thereby restricts transcription of YAP1 target genes. As to quaternary structure, interacts with CLDN19. In terms of tissue distribution, expressed in the lung (at protein level). As to expression, expressed in lung. Expressed in the stomach. Expressed in lung. In terms of tissue distribution, expressed in stomach. Expressed in bone. As to expression, expressed in stomach.

It is found in the cell junction. It localises to the tight junction. The protein resides in the cell membrane. The protein localises to the lateral cell membrane. Its function is as follows. Involved in alveolar fluid homeostasis via regulation of alveolar epithelial tight junction composition and therefore ion transport and solute permeability, potentially via downstream regulation of the actin cytoskeleton organization and beta-2-adrenergic signaling. Required for lung alveolarization and maintenance of the paracellular alveolar epithelial barrier. Acts to maintain epithelial progenitor cell proliferation and organ size, via regulation of YAP1 localization away from the nucleus and thereby restriction of YAP1 target gene transcription. Acts as a negative regulator of RANKL-induced osteoclast differentiation, potentially via relocation of TJP2/ZO-2 away from the nucleus, subsequently involved in bone resorption in response to calcium deficiency. Mediates the osteoprotective effects of estrogen, potentially via acting downstream of estrogen signaling independently of RANKL signaling pathways. Involved in the maintenance of homeostasis of the alveolar microenvironment via regulation of pH and subsequent T-cell activation in the alveolar space, is therefore indirectly involved in limiting C.neoformans infection. Functionally, required for the formation of the gastric paracellular barrier via its role in tight junction formation, thereby involved in the response to gastric acidification. The protein is Claudin-18 (Cldn18) of Mus musculus (Mouse).